The following is a 147-amino-acid chain: Sentan (147 aa).

The disordered stretch occupies residues 1–32 (MGGCMHSTQDKSLHLEGDPNPSAAPTSTCAPR). Basic and acidic residues predominate over residues 8–17 (TQDKSLHLEG).

It belongs to the S-100 family.

Its subcellular location is the cell projection. The protein resides in the cilium. May be a component of the linker structure that bridges the ciliary membrane and peripheral singlet microtubules. The sequence is that of Sentan (SNTN) from Homo sapiens (Human).